An 855-amino-acid chain; its full sequence is DNA mismatch repair protein MutS (855 aa).

618–625 (GPNMGGKS) contacts ATP.

It belongs to the DNA mismatch repair MutS family.

Functionally, this protein is involved in the repair of mismatches in DNA. It is possible that it carries out the mismatch recognition step. This protein has a weak ATPase activity. The protein is DNA mismatch repair protein MutS of Shewanella loihica (strain ATCC BAA-1088 / PV-4).